The sequence spans 267 residues: S-adenosylmethionine decarboxylase proenzyme (267 aa).

The active-site Schiff-base intermediate with substrate; via pyruvic acid is the serine 114. The residue at position 114 (serine 114) is a Pyruvic acid (Ser); by autocatalysis. The active-site Proton acceptor; for processing activity is histidine 119. The active-site Proton donor; for catalytic activity is cysteine 142.

This sequence belongs to the prokaryotic AdoMetDC family. Type 2 subfamily. In terms of assembly, heterooctamer of four alpha and four beta chains arranged as a tetramer of alpha/beta heterodimers. Pyruvate serves as cofactor. Is synthesized initially as an inactive proenzyme. Formation of the active enzyme involves a self-maturation process in which the active site pyruvoyl group is generated from an internal serine residue via an autocatalytic post-translational modification. Two non-identical subunits are generated from the proenzyme in this reaction, and the pyruvate is formed at the N-terminus of the alpha chain, which is derived from the carboxyl end of the proenzyme. The post-translation cleavage follows an unusual pathway, termed non-hydrolytic serinolysis, in which the side chain hydroxyl group of the serine supplies its oxygen atom to form the C-terminus of the beta chain, while the remainder of the serine residue undergoes an oxidative deamination to produce ammonia and the pyruvoyl group blocking the N-terminus of the alpha chain.

It catalyses the reaction S-adenosyl-L-methionine + H(+) = S-adenosyl 3-(methylsulfanyl)propylamine + CO2. It functions in the pathway amine and polyamine biosynthesis; S-adenosylmethioninamine biosynthesis; S-adenosylmethioninamine from S-adenosyl-L-methionine: step 1/1. In terms of biological role, catalyzes the decarboxylation of S-adenosylmethionine to S-adenosylmethioninamine (dcAdoMet), the propylamine donor required for the synthesis of the polyamines spermine and spermidine from the diamine putrescine. This chain is S-adenosylmethionine decarboxylase proenzyme, found in Erwinia tasmaniensis (strain DSM 17950 / CFBP 7177 / CIP 109463 / NCPPB 4357 / Et1/99).